Reading from the N-terminus, the 142-residue chain is Large ribosomal subunit protein uL13 (142 aa).

This sequence belongs to the universal ribosomal protein uL13 family. In terms of assembly, part of the 50S ribosomal subunit.

Its function is as follows. This protein is one of the early assembly proteins of the 50S ribosomal subunit, although it is not seen to bind rRNA by itself. It is important during the early stages of 50S assembly. The protein is Large ribosomal subunit protein uL13 of Vibrio atlanticus (strain LGP32) (Vibrio splendidus (strain Mel32)).